The chain runs to 172 residues: Ribosomally synthesized cyclic peptide phomopsin precursor phomA (172 aa).

The N-terminal stretch at 1-18 (MRFTPAIVIAAFCSLAVA) is a signal peptide. 11 consecutive propeptides follow at residues 19–35 (APAA…AVED), 42–50 (KKRGEAVED), 57–65 (KKRGEAVED), 72–79 (KRGEAVED), 86–93 (KRGEAVED), 100–108 (KKRGEAVED), 115–122 (KRGEAVED), 129–137 (RKRGEAVED), 144–151 (KRGEAVED), 158–165 (KRGEAVED), and K172.

Post-translationally, phomA is processed by several endopeptidases including kexin proteases as well as the cluster-specific S41 family peptidase phomP1 and the oligopeptidase phomG to produce 10 identical copies of the hexapeptide Tyr-Val-Ile-Pro-Ile-Asp, that is further modified to yield phomapsins. The timing and order of proteolysis of the phomA precursor and PTMs are still unknown. Two tyrosinase-like enzymes, phomQ1 and phomQ2, catalyze the chlorination and hydroxylation of Tyr, respectively. PhomYb, is proposed to be involved in the construction of the macrocyclic structure. The other 4 ustYa family proteins may be involved in PTMs that generate the unique structure of phomopsin A. PhomYa is required for the hydroxylation of C-beta of Tyr. PhomYc, phomYd, and phomYe are responsible for the biosynthesis of 2,3-dehydroisoleucine (dIle), 2,3-dehydroaspartic acid (dAsp), and 3,4-dehydroproline (dPro), respectively. While dIle formation by phomYc is indispensable for the installation of dAsp by phomYd, the order of the other PTMs have not been elucidated yet. Most of the biosynthetic enzymes likely have broad substrate specificity, and thus, there might be a metabolic grid from a precursor to phomopsin A. The enzyme(s) responsible for the biosynthesis of 3,4-dehydrovaline (dVal) have also not been identified yet. Finally, phomM acts as an S-adenosylmethionine-dependent alpha-N-methyltransferase that catalyzes two successive N-methylation reactions, converting N-desmethyl-phomopsin A to phomopsin A and phomopsin A further to an N,N-dimethylated congener called phomopsin E.

It participates in mycotoxin biosynthesis. Its function is as follows. Ribosomally synthesized cyclic peptide phomopsin precursor; part of the gene cluster that mediates the biosynthesis of the phomopsins, a group of hexapeptide mycotoxins which infects lupins and causes lupinosis disease in livestock. The phomA translated product contains a 10-fold repeated peptide embedding the hexapeptide Tyr-Val-Ile-Pro-Ile-Asp, that is converted into phomapsins. After being excised from the precursor peptide by kexin proteases, the core peptides are cyclized and modified post-translationally by enzymes encoded within the corresponding gene cluster. This Diaporthe leptostromiformis (Lupinosis disease fungus) protein is Ribosomally synthesized cyclic peptide phomopsin precursor phomA.